Here is a 188-residue protein sequence, read N- to C-terminus: Elongation factor P (188 aa).

The protein belongs to the elongation factor P family.

It localises to the cytoplasm. The protein operates within protein biosynthesis; polypeptide chain elongation. Functionally, involved in peptide bond synthesis. Stimulates efficient translation and peptide-bond synthesis on native or reconstituted 70S ribosomes in vitro. Probably functions indirectly by altering the affinity of the ribosome for aminoacyl-tRNA, thus increasing their reactivity as acceptors for peptidyl transferase. This is Elongation factor P from Ralstonia nicotianae (strain ATCC BAA-1114 / GMI1000) (Ralstonia solanacearum).